The primary structure comprises 356 residues: Methionine import ATP-binding protein MetN 1 (356 aa).

An ABC transporter domain is found at 15-254 (IQIRALNKTY…PVQPITQELL (240 aa)). 51–58 (GKSGAGKS) is a binding site for ATP.

Belongs to the ABC transporter superfamily. Methionine importer (TC 3.A.1.24) family. In terms of assembly, the complex is composed of two ATP-binding proteins (MetN), two transmembrane proteins (MetI) and a solute-binding protein (MetQ).

Its subcellular location is the cell inner membrane. The enzyme catalyses L-methionine(out) + ATP + H2O = L-methionine(in) + ADP + phosphate + H(+). The catalysed reaction is D-methionine(out) + ATP + H2O = D-methionine(in) + ADP + phosphate + H(+). Functionally, part of the ABC transporter complex MetNIQ involved in methionine import. Responsible for energy coupling to the transport system. The sequence is that of Methionine import ATP-binding protein MetN 1 from Acinetobacter baylyi (strain ATCC 33305 / BD413 / ADP1).